A 598-amino-acid chain; its full sequence is Thiol:disulfide interchange protein DsbD (598 aa).

An N-terminal signal peptide occupies residues 1 to 21; it reads MRALLTFFVAGLLVLSSPAMA. A disulfide bridge links Cys-130 with Cys-136. The interval 158–180 is disordered; sequence TMPTQTASPLDTSTANTSTPQPL. Polar residues predominate over residues 159–180; sequence MPTQTASPLDTSTANTSTPQPL. 8 consecutive transmembrane segments (helical) span residues 198–220, 240–262, 274–296, 324–346, 353–375, 385–407, 414–431, and 446–468; these read LLFL…YPIL, LVYV…SAGL, LIGL…TLQL, AISG…LYVA, TGGV…VAVF, GWMD…FLLE, WSTA…GWLY, and AVGI…YWFA. A disulfide bridge links Cys-212 with Cys-333. The region spanning 456–598 is the Thioredoxin domain; sequence FASAQPALNY…FLEHIQRISN (143 aa). Cys-513 and Cys-516 are disulfide-bonded.

The protein belongs to the thioredoxin family. DsbD subfamily.

It is found in the cell inner membrane. It carries out the reaction [protein]-dithiol + NAD(+) = [protein]-disulfide + NADH + H(+). The enzyme catalyses [protein]-dithiol + NADP(+) = [protein]-disulfide + NADPH + H(+). Required to facilitate the formation of correct disulfide bonds in some periplasmic proteins and for the assembly of the periplasmic c-type cytochromes. Acts by transferring electrons from cytoplasmic thioredoxin to the periplasm. This transfer involves a cascade of disulfide bond formation and reduction steps. This is Thiol:disulfide interchange protein DsbD from Vibrio vulnificus (strain YJ016).